A 451-amino-acid polypeptide reads, in one-letter code: Tubulin gamma-1 chain (451 aa).

Residue serine 131 is modified to Phosphoserine; by BRSK1. A GTP-binding site is contributed by 142 to 148 (AGGTGSG).

Belongs to the tubulin family. As to quaternary structure, component of the gamma-tubulin ring complex (gTuRC) consisting of TUBGCP2, TUBGCP3, TUBGCP4, TUBGCP5 and TUBGCP6 and gamma-tubulin TUBG1 or TUBG2. TUBGCP2, TUBGCP3, TUBGCP4, TUBGCP5 and TUBGCP6 assemble in a 5:5:2:1:1 stoichiometry; each is associated with a gamma-tubulin, thereby arranging 14 gamma-tubulins in a helical manner. Gamma-tubulin at the first position is blocked by TUBGCP3 at the last position, allowing 13 protafilaments to grow into a microtubule. The gTuRC (via TUBGCP3 and TUBGCP6) interacts with ACTB and MZT1; the interactions form a luminal bridge that stabilizes the initial structure during complex assembly. The gTuRC (via TUBGCP2) interacts with MZT2A/MZT2B and CDK5RAP2 (via CM1 motif); the interactions play a role in gTuRC activation. Interacts with alpha-beta tubulin heterodimers; the interaction allows microtubules to nucleate from the gTuRC. Interacts with B9D2. Interacts with CDK5RAP2; the interaction is leading to centrosomal localization of TUBG1 and CDK5RAP2. Interacts with CIMAP3. Interacts with SAS6 and NUP62 at the centrosome. Interacts with EML3 (phosphorylated at 'Thr-881') and HAUS8. Interacts with DNM2; this interaction may participate in centrosome cohesion. Interacts with CCDC66. Phosphorylation at Ser-131 by BRSK1 regulates centrosome duplication, possibly by mediating relocation of gamma-tubulin and its associated proteins from the cytoplasm to the centrosome.

It is found in the cytoplasm. It localises to the cytoskeleton. The protein resides in the microtubule organizing center. Its subcellular location is the centrosome. The protein localises to the spindle. Its function is as follows. Tubulin is the major constituent of microtubules, protein filaments consisting of alpha- and beta-tubulin heterodimers. Gamma-tubulin is a key component of the gamma-tubulin ring complex (gTuRC) which mediates microtubule nucleation. The gTuRC regulates the minus-end nucleation of alpha-beta tubulin heterodimers that grow into microtubule protafilaments, a critical step in centrosome duplication and spindle formation. The polypeptide is Tubulin gamma-1 chain (Homo sapiens (Human)).